The following is a 2214-amino-acid chain: Genome polyprotein (2214 aa).

Disordered regions lie at residues 1 to 21 and 600 to 619; these read MGAQVSSQKVGAHENTNVATG and KPQKQLTAQSTPSTSGVNSQ. The N-myristoyl glycine; by host moiety is linked to residue Gly-2. Residues 2-1525 lie on the Cytoplasmic side of the membrane; the sequence is GAQVSSQKVG…NLNRAMTILQ (1524 aa). Amphipathic alpha-helix stretches follow at residues 580-601 and 581-601; these read QGIEETIDTVISNALQLSQPKP and GIEETIDTVISNALQLSQPKP. The span at 606 to 619 shows a compositional bias: polar residues; sequence TAQSTPSTSGVNSQ. Active-site for protease 2A activity residues include His-906 and Asp-924. Positions 941 and 943 each coordinate Zn(2+). Residue Cys-995 is the For protease 2A activity of the active site. Cys-1001 and His-1003 together coordinate Zn(2+). The interval 1133–1205 is membrane-binding; sequence GDSWLKKFTE…HQSCPSQEQQ (73 aa). Positions 1133-1271 are oligomerization; the sequence is GDSWLKKFTE…SPGTGKSIAT (139 aa). The interval 1154–1158 is RNA-binding; that stretch reads SNKIS. One can recognise an SF3 helicase domain in the interval 1237 to 1393; it reads ENTINNYIQF…SEHSIKGKLN (157 aa). ATP is bound at residue 1261–1268; sequence GSPGTGKS. 4 residues coordinate Zn(2+): Cys-1401, Cys-1404, Cys-1413, and Cys-1418. The C4-type zinc-finger motif lies at 1401–1418; the sequence is CKDCPQPANFKKCCPLVC. The segment at 1445 to 1452 is RNA-binding; the sequence is ERNRRANI. The tract at residues 1456–1461 is oligomerization; that stretch reads MEALFQ. Residues 1526-1541 lie within the membrane without spanning it; sequence AVTTFAAVAAVVYVMY. Residues 1542–2214 are Cytoplasmic-facing; it reads KLFAGHQGAY…TLYRRWLDSF (673 aa). Tyr-1551 carries the O-(5'-phospho-RNA)-tyrosine modification. In terms of domain architecture, Peptidase C3 spans 1571 to 1749; the sequence is GPGFDYAVAM…FAAALKRSYF (179 aa). Catalysis depends on for protease 3C activity residues His-1610, Glu-1641, and Cys-1717. The 116-residue stretch at 1980–2095 folds into the RdRp catalytic domain; that stretch reads EKLFAFDYTG…SYPHEVDASL (116 aa). 2 residues coordinate Mg(2+): Asp-1986 and Asp-2081.

This sequence belongs to the picornaviruses polyprotein family. As to quaternary structure, interacts with capsid protein VP1 and capsid protein VP3 to form heterotrimeric protomers. Interacts with capsid protein VP0, and capsid protein VP3 to form heterotrimeric protomers. Five protomers subsequently associate to form pentamers which serve as building blocks for the capsid. Interacts with capsid protein VP2, capsid protein VP3 and capsid protein VP4 following cleavage of capsid protein VP0. In terms of assembly, interacts with capsid protein VP1 and capsid protein VP3 in the mature capsid. As to quaternary structure, interacts with capsid protein VP0 and capsid protein VP1 to form heterotrimeric protomers. Five protomers subsequently associate to form pentamers which serve as building blocks for the capsid. Interacts with capsid protein VP4 in the mature capsid. Interacts with protein 2C; this interaction may be important for virion morphogenesis. Interacts with capsid protein VP1 and capsid protein VP3. In terms of assembly, homodimer. As to quaternary structure, homohexamer; forms a hexameric ring structure with 6-fold symmetry characteristic of AAA+ ATPases. Interacts (via N-terminus) with host RTN3 (via reticulon domain); this interaction is important for viral replication. Interacts with capsid protein VP3; this interaction may be important for virion morphogenesis. Interacts with protein 3CD. In terms of assembly, homodimer. Interacts with host GBF1. Interacts (via GOLD domain) with host ACBD3 (via GOLD domain); this interaction allows the formation of a viral protein 3A/ACBD3 heterotetramer with a 2:2 stoichiometry, which will stimulate the recruitment of host PI4KB in order to synthesize PI4P at the viral RNA replication sites. As to quaternary structure, interacts with RNA-directed RNA polymerase. Interacts with protein 3AB and with RNA-directed RNA polymerase. In terms of assembly, interacts with Viral protein genome-linked and with protein 3CD. The cofactor is Mg(2+). In terms of processing, specific enzymatic cleavages in vivo by the viral proteases yield processing intermediates and the mature proteins. Myristoylation is required for the formation of pentamers during virus assembly. Further assembly of 12 pentamers and a molecule of genomic RNA generates the provirion. Post-translationally, during virion maturation, immature virions are rendered infectious following cleavage of VP0 into VP4 and VP2. This maturation seems to be an autocatalytic event triggered by the presence of RNA in the capsid and it is followed by a conformational change infectious virion. In terms of processing, myristoylation is required during RNA encapsidation and formation of the mature virus particle. VPg is uridylylated by the polymerase into VPg-pUpU. This acts as a nucleotide-peptide primer for the genomic RNA replication.

The protein localises to the virion. The protein resides in the host cytoplasm. It localises to the host cytoplasmic vesicle membrane. Its subcellular location is the host nucleus. The catalysed reaction is a ribonucleoside 5'-triphosphate + H2O = a ribonucleoside 5'-diphosphate + phosphate + H(+). It carries out the reaction Selective cleavage of Tyr-|-Gly bond in the picornavirus polyprotein.. The enzyme catalyses RNA(n) + a ribonucleoside 5'-triphosphate = RNA(n+1) + diphosphate. It catalyses the reaction Selective cleavage of Gln-|-Gly bond in the poliovirus polyprotein. In other picornavirus reactions Glu may be substituted for Gln, and Ser or Thr for Gly.. Replication or transcription is subject to high level of random mutations by the nucleotide analog ribavirin. In terms of biological role, forms an icosahedral capsid of pseudo T=3 symmetry with capsid proteins VP2 and VP3. The capsid is 300 Angstroms in diameter, composed of 60 copies of each capsid protein and enclosing the viral positive strand RNA genome. Capsid protein VP1 mainly forms the vertices of the capsid. Capsid protein VP1 interacts with host cell receptor to provide virion attachment to target host cells. This attachment induces virion internalization. Tyrosine kinases are probably involved in the entry process. After binding to its receptor, the capsid undergoes conformational changes. Capsid protein VP1 N-terminus (that contains an amphipathic alpha-helix) and capsid protein VP4 are externalized. Together, they shape a pore in the host membrane through which viral genome is translocated to host cell cytoplasm. Forms an icosahedral capsid of pseudo T=3 symmetry with capsid proteins VP2 and VP3. The capsid is 300 Angstroms in diameter, composed of 60 copies of each capsid protein and enclosing the viral positive strand RNA genome. Its function is as follows. Lies on the inner surface of the capsid shell. After binding to the host receptor, the capsid undergoes conformational changes. Capsid protein VP4 is released, Capsid protein VP1 N-terminus is externalized, and together, they shape a pore in the host membrane through which the viral genome is translocated into the host cell cytoplasm. Functionally, component of immature procapsids, which is cleaved into capsid proteins VP4 and VP2 after maturation. Allows the capsid to remain inactive before the maturation step. In terms of biological role, cysteine protease that cleaves viral polyprotein and specific host proteins. It is responsible for the autocatalytic cleavage between the P1 and P2 regions, which is the first cleavage occurring in the polyprotein. Also cleaves the host translation initiation factor EIF4G1, in order to shut down the capped cellular mRNA translation. Inhibits the host nucleus-cytoplasm protein and RNA trafficking by cleaving host members of the nuclear pores. Counteracts stress granule formation probably by antagonizing its assembly or promoting its dissassembly. Cleaves and inhibits host IFIH1/MDA5, thereby inhibiting the type-I IFN production and the establishment of the antiviral state. Cleaves and inhibits host MAVS, thereby inhibiting the type-I IFN production and the establishment of the antiviral state. Plays an essential role in the virus replication cycle by acting as a viroporin. Creates a pore in the host endoplasmic reticulum and as a consequence releases Ca2+ in the cytoplasm of infected cell. In turn, high levels of cytoplasmic calcium may trigger membrane trafficking and transport of viral ER-associated proteins to viroplasms, sites of viral genome replication. Its function is as follows. Induces and associates with structural rearrangements of intracellular membranes. Displays RNA-binding, nucleotide binding and NTPase activities. May play a role in virion morphogenesis and viral RNA encapsidation by interacting with the capsid protein VP3. Functionally, localizes the viral replication complex to the surface of membranous vesicles. Together with protein 3CD binds the Cis-Active RNA Element (CRE) which is involved in RNA synthesis initiation. Acts as a cofactor to stimulate the activity of 3D polymerase, maybe through a nucleid acid chaperone activity. In terms of biological role, localizes the viral replication complex to the surface of membranous vesicles. It inhibits host cell endoplasmic reticulum-to-Golgi apparatus transport and causes the disassembly of the Golgi complex, possibly through GBF1 interaction. This would result in depletion of MHC, trail receptors and IFN receptors at the host cell surface. Plays an essential role in viral RNA replication by recruiting ACBD3 and PI4KB at the viral replication sites, thereby allowing the formation of the rearranged membranous structures where viral replication takes place. Acts as a primer for viral RNA replication and remains covalently bound to viral genomic RNA. VPg is uridylylated prior to priming replication into VPg-pUpU. The oriI viral genomic sequence may act as a template for this. The VPg-pUpU is then used as primer on the genomic RNA poly(A) by the RNA-dependent RNA polymerase to replicate the viral genome. During genome replication, the VPg-RNA linkage is removed by the host TDP2, thereby accelerating replication. During the late stage of the replication cycle, host TDP2 is excluded from sites of viral RNA synthesis and encapsidation, allowing for the generation of progeny virions. Its function is as follows. Involved in the viral replication complex and viral polypeptide maturation. It exhibits protease activity with a specificity and catalytic efficiency that is different from protease 3C. Protein 3CD lacks polymerase activity. Protein 3CD binds to the 5'UTR of the viral genome. Functionally, replicates the viral genomic RNA on the surface of intracellular membranes. May form linear arrays of subunits that propagate along a strong head-to-tail interaction called interface-I. Covalently attaches UMP to a tyrosine of VPg, which is used to prime RNA synthesis. The positive stranded RNA genome is first replicated at virus induced membranous vesicles, creating a dsRNA genomic replication form. This dsRNA is then used as template to synthesize positive stranded RNA genomes. ss(+)RNA genomes are either translated, replicated or encapsidated. In terms of biological role, major viral protease that mediates proteolytic processing of the polyprotein. Cleaves host EIF5B, contributing to host translation shutoff. Also cleaves host PABPC1, contributing to host translation shutoff. Cleaves host NLRP1, triggers host N-glycine-mediated degradation of the autoinhibitory NLRP1 N-terminal fragment. The chain is Genome polyprotein from Coxsackievirus A24 (strain EH24/70).